We begin with the raw amino-acid sequence, 311 residues long: T-cell acute lymphocytic leukemia protein 1 homolog (311 aa).

Pro residues predominate over residues 1–14 (MTMDRPPAPPPPSS). The interval 1–67 (MTMDRPPAPP…RPSPGPPAAA (67 aa)) is disordered. Residues 15–25 (DPRDARRHDPE) are compositionally biased toward basic and acidic residues. Residues 179 to 231 (VRRIFTNSRERWRQQNVNGAFAELRKLIPTHPPDKKLSKNEILRLAMKYINFL) form the bHLH domain. The interval 265 to 311 (SPNSSCGSSLDGAASPDSFTEEHDTLDSKHARNLHHAILPVEGSAQR) is disordered. Positions 284–294 (TEEHDTLDSKH) are enriched in basic and acidic residues.

Efficient DNA binding requires dimerization with another bHLH protein. Forms heterodimers with TCF3. Post-translationally, phosphorylated on serine residues.

The protein resides in the nucleus. Implicated in the genesis of hemopoietic malignancies. It may play an important role in hemopoietic differentiation. The sequence is that of T-cell acute lymphocytic leukemia protein 1 homolog (TAL1) from Gallus gallus (Chicken).